The chain runs to 172 residues: Large ribosomal subunit protein uL10 (172 aa).

The protein belongs to the universal ribosomal protein uL10 family. As to quaternary structure, part of the ribosomal stalk of the 50S ribosomal subunit. The N-terminus interacts with L11 and the large rRNA to form the base of the stalk. The C-terminus forms an elongated spine to which L12 dimers bind in a sequential fashion forming a multimeric L10(L12)X complex.

Its function is as follows. Forms part of the ribosomal stalk, playing a central role in the interaction of the ribosome with GTP-bound translation factors. In Rhizobium johnstonii (strain DSM 114642 / LMG 32736 / 3841) (Rhizobium leguminosarum bv. viciae), this protein is Large ribosomal subunit protein uL10.